The following is a 577-amino-acid chain: Laccase-25 (577 aa).

The signal sequence occupies residues 1–22 (MTLHWSLLLFIAIALVSSVAQA). Plastocyanin-like domains follow at residues 30–147 (NVGN…PRGG) and 158–313 (KEHV…YAGA). N-linked (GlcNAc...) asparagine glycosylation occurs at asparagine 33. The Cu cation site is built by histidine 81 and histidine 83. N-linked (GlcNAc...) asparagine glycosylation occurs at asparagine 109. Residues histidine 126 and histidine 128 each contribute to the Cu cation site. Asparagine 169, asparagine 203, asparagine 208, asparagine 218, asparagine 332, asparagine 383, asparagine 396, asparagine 404, asparagine 441, and asparagine 459 each carry an N-linked (GlcNAc...) asparagine glycan. Residues 423-560 (DFPDTPPVVF…AMVLEVLDGP (138 aa)) form the Plastocyanin-like 3 domain. Residues histidine 477, histidine 480, histidine 482, histidine 539, cysteine 540, histidine 541, and histidine 545 each contribute to the Cu cation site.

This sequence belongs to the multicopper oxidase family. The cofactor is Cu cation.

It localises to the secreted. The protein resides in the extracellular space. The protein localises to the apoplast. It catalyses the reaction 4 hydroquinone + O2 = 4 benzosemiquinone + 2 H2O. Its function is as follows. Lignin degradation and detoxification of lignin-derived products. In Oryza sativa subsp. japonica (Rice), this protein is Laccase-25 (LAC25).